Consider the following 146-residue polypeptide: D-aminoacyl-tRNA deacylase (146 aa).

Positions 137–138 (GP) match the Gly-cisPro motif, important for rejection of L-amino acids motif.

It belongs to the DTD family. In terms of assembly, homodimer.

It localises to the cytoplasm. It carries out the reaction glycyl-tRNA(Ala) + H2O = tRNA(Ala) + glycine + H(+). The catalysed reaction is a D-aminoacyl-tRNA + H2O = a tRNA + a D-alpha-amino acid + H(+). In terms of biological role, an aminoacyl-tRNA editing enzyme that deacylates mischarged D-aminoacyl-tRNAs. Also deacylates mischarged glycyl-tRNA(Ala), protecting cells against glycine mischarging by AlaRS. Acts via tRNA-based rather than protein-based catalysis; rejects L-amino acids rather than detecting D-amino acids in the active site. By recycling D-aminoacyl-tRNA to D-amino acids and free tRNA molecules, this enzyme counteracts the toxicity associated with the formation of D-aminoacyl-tRNA entities in vivo and helps enforce protein L-homochirality. This is D-aminoacyl-tRNA deacylase from Bacillus cytotoxicus (strain DSM 22905 / CIP 110041 / 391-98 / NVH 391-98).